Reading from the N-terminus, the 714-residue chain is Phosphate acetyltransferase (714 aa).

The tract at residues 390 to 714 (AFRYQLTELA…TAIQASQQQQ (325 aa)) is phosphate acetyltransferase.

In the N-terminal section; belongs to the CobB/CobQ family. It in the C-terminal section; belongs to the phosphate acetyltransferase and butyryltransferase family. In terms of assembly, homohexamer.

Its subcellular location is the cytoplasm. The catalysed reaction is acetyl-CoA + phosphate = acetyl phosphate + CoA. The enzyme catalyses propanoyl-CoA + phosphate = propanoyl phosphate + CoA. It participates in metabolic intermediate biosynthesis; acetyl-CoA biosynthesis; acetyl-CoA from acetate: step 2/2. Its activity is regulated as follows. Allosterically inhibited by NADH. Involved in acetate metabolism. Catalyzes the reversible interconversion of acetyl-CoA and acetyl phosphate. The direction of the overall reaction changes depending on growth conditions. Required for acetate recapture but not for acetate excretion when this organism is grown on ethanolamine (EA); is unable to complement an eutD deletion during growth on EA. Works with proprionate kinase PduW to capture exogenous propionate and regenerate propionyl-CoA during degradation of propionate and 1,2-propanediol (1,2-PD). The polypeptide is Phosphate acetyltransferase (pta) (Salmonella typhimurium (strain LT2 / SGSC1412 / ATCC 700720)).